We begin with the raw amino-acid sequence, 63 residues long: Large ribosomal subunit protein bL35 (63 aa).

This sequence belongs to the bacterial ribosomal protein bL35 family.

This is Large ribosomal subunit protein bL35 from Sulfurimonas denitrificans (strain ATCC 33889 / DSM 1251) (Thiomicrospira denitrificans (strain ATCC 33889 / DSM 1251)).